A 376-amino-acid polypeptide reads, in one-letter code: Carbohydrate sulfotransferase 14 (376 aa).

Over 1 to 39 the chain is Cytoplasmic; it reads MFPRPLTPLAAPNGAEPLGRALRRAPLGRARAGLGGPPL. Residues 40–60 form a helical; Signal-anchor for type II membrane protein membrane-spanning segment; the sequence is LLPSMLMFAVIVASSGLLLMI. Residues 61-376 lie on the Lumenal side of the membrane; it reads ERGILAEMKP…PNVTKEACQQ (316 aa). N-linked (GlcNAc...) asparagine glycosylation occurs at asparagine 110. Residues 155–161 and 213–221 contribute to the 3'-phosphoadenylyl sulfate site; these read PKVACSN and REPLERLLS. N-linked (GlcNAc...) asparagine glycosylation is present at asparagine 368.

This sequence belongs to the sulfotransferase 2 family. Widely expressed. Expressed at high level in pituitary gland, placenta, uterus and thyroid.

Its subcellular location is the golgi apparatus membrane. The enzyme catalyses dermatan + n 3'-phosphoadenylyl sulfate = dermatan 4'-sulfate + n adenosine 3',5'-bisphosphate + n H(+). Its function is as follows. Catalyzes the transfer of sulfate to position 4 of the N-acetylgalactosamine (GalNAc) residue of dermatan sulfate. Plays a pivotal role in the formation of 4-0-sulfated IdoA blocks in dermatan sulfate. Transfers sulfate to the C-4 hydroxyl of beta1,4-linked GalNAc that is substituted with an alpha-linked iduronic acid (IdoUA) at the C-3 hydroxyl. Transfers sulfate more efficiently to GalNAc residues in -IdoUA-GalNAc-IdoUA- than in -GlcUA-GalNAc-GlcUA-sequences. Has preference for partially desulfated dermatan sulfate. Addition of sulfate to GalNAc may occur immediately after epimerization of GlcUA to IdoUA. Appears to have an important role in the formation of the cerebellar neural network during postnatal brain development. In Homo sapiens (Human), this protein is Carbohydrate sulfotransferase 14 (CHST14).